The chain runs to 375 residues: MQCALYDAGRCRSCQWITQSVNEQLSAKTADLHRLLAGLPVEQWCAPTGGPEQHFRNKAKMVVSGSVEKPLFGMLHRDGTPVDLCGCPLYPASFAPVFSALKPFIARAGLTPYNVARKRGELKYLLLTESQFDGGMMLRFVLRSETKLTQLRAALPWLRAQLPQLRVITANIQPVHMAIMEGETEIYLTDQQALAERFNDVPLWIRPQSFFQTNPTVASRLYATARDWVGQLPVRHMWDLFCGVGGFGLHCATPQMQLTGIEIAPEAIACAKQSAAELGLTRLHFQALDSTQFATAQGETPDLVLVNPPRRGIGKPLCDYLAQMAPRFIIYSSCNAQTMAQDIRHLPNYRIQRVQLFDMFPHTAHYEVLTLLCRQ.

Residues Cys-3, Cys-11, Cys-14, and Cys-87 each coordinate [4Fe-4S] cluster. The S-adenosyl-L-methionine site is built by Gln-212, Phe-241, Glu-262, and Asn-307. The active-site Nucleophile is the Cys-334.

The protein belongs to the class I-like SAM-binding methyltransferase superfamily. RNA M5U methyltransferase family. RlmC subfamily.

The enzyme catalyses uridine(747) in 23S rRNA + S-adenosyl-L-methionine = 5-methyluridine(747) in 23S rRNA + S-adenosyl-L-homocysteine + H(+). Catalyzes the formation of 5-methyl-uridine at position 747 (m5U747) in 23S rRNA. The chain is 23S rRNA (uracil(747)-C(5))-methyltransferase RlmC from Salmonella paratyphi A (strain ATCC 9150 / SARB42).